Consider the following 2359-residue polypeptide: Voltage-dependent T-type calcium channel subunit alpha-1H (2359 aa).

The interval 1–63 is disordered; the sequence is MTEGTLAADE…PGTECGADLG (63 aa). Over 1-100 the chain is Cytoplasmic; that stretch reads MTEGTLAADE…SWCLRLVCNP (100 aa). Residues 24–36 are compositionally biased toward low complexity; it reads APVRASPASPGAP. The stretch at 87–422 is one I repeat; that stretch reads TRPRSWCLRL…LCLVVIATQF (336 aa). Residues 101 to 119 form a helical membrane-spanning segment; it reads WFEHISMLVIMLNCVTLGM. The Extracellular portion of the chain corresponds to 120-141; the sequence is FRPCEDVECRSERCSILEAFDD. D140 lines the Zn(2+) pocket. Residues 142 to 160 form a helical membrane-spanning segment; it reads FIFAFFAVEMVIKMVALGL. The Cytoplasmic portion of the chain corresponds to 161-169; sequence FGQKCYLGD. The helical transmembrane segment at 170 to 184 threads the bilayer; sequence TWNRLDFFIVMAGMM. Residues 185–193 lie on the Extracellular side of the membrane; the sequence is EYSLDGHNV. Zn(2+) contacts are provided by D189 and H191. N-linked (GlcNAc...) asparagine glycosylation is present at N192. The chain crosses the membrane as a helical span at residues 194–212; sequence SLSAIRTVRVLRPLRAINR. Residues 213–232 are Cytoplasmic-facing; the sequence is VPSMRILVTLLLDTLPMLGN. Residues 233–253 form a helical membrane-spanning segment; the sequence is VLLLCFFVFFIFGIVGVQLWA. At 254–394 the chain is on the extracellular side; sequence GLLRNRCFLD…YYVMDAHSFY (141 aa). N271 is a glycosylation site (N-linked (GlcNAc...) asparagine). A helical membrane pass occupies residues 395–419; sequence NFIYFILLIIMGSFFMINLCLVVIA. Topologically, residues 420-790 are cytoplasmic; the sequence is TQFSETKQRE…GKLRRIVDSK (371 aa). Disordered regions lie at residues 490 to 573, 620 to 656, and 737 to 769; these read VDPS…SESV, GTVN…SPRP, and GDCR…ASQP. The span at 503 to 532 shows a compositional bias: basic residues; the sequence is RRPRRAGRRTASVHHLVYHHHHHHHHHYHF. A compositionally biased stretch (pro residues) spans 557–566; sequence PPSPPSPGHG. The segment covering 620-631 has biased composition (polar residues); it reads GTVNSKGGTSSR. The II repeat unit spans residues 776 to 1015; the sequence is WASFSGKLRR…LLVAILVEGF (240 aa). Residues 791-811 traverse the membrane as a helical segment; the sequence is YFNRGIMAAILVNTLSMGVEY. Residues 812–824 are Extracellular-facing; that stretch reads HEQPEELTNALEI. The helical transmembrane segment at 825 to 846 threads the bilayer; the sequence is SNIVFTSMFALEMLLKLLACGP. The Cytoplasmic segment spans residues 847–852; sequence LGYIRN. A helical transmembrane segment spans residues 853–871; it reads PYNIFDGIVVVISVWEIVG. Residues 872–879 are Extracellular-facing; that stretch reads QANGGLSV. A helical membrane pass occupies residues 880-903; sequence LRTFRLLRVLKLVRFLPALRRQLV. Residues 904 to 914 are Cytoplasmic-facing; that stretch reads VLMRTMDNVAT. Residues 915 to 935 traverse the membrane as a helical segment; the sequence is FCMLLMLFIFIFSILGMHLFG. Residues 936–987 are Extracellular-facing; the sequence is CKFSLKTDSGDTVPDRKNFDSLLWAIVTVFQILTQEDWNVVLYNGMASTSSW. Residues 988-1012 form a helical membrane-spanning segment; that stretch reads AALYFVALMTFGNYVLFNLLVAILV. Topologically, residues 1013–1301 are cytoplasmic; it reads EGFQAEGDAT…NRLRVSCQKV (289 aa). The tract at residues 1061-1197 is disordered; sequence GHLEGRGSLP…GASPGPRATP (137 aa). Residues 1117-1126 are compositionally biased toward polar residues; sequence SLASLRSSPC. Residues 1130–1147 show a composition bias toward low complexity; the sequence is GPNSAGSSRRSSWNSLGR. The III repeat unit spans residues 1292–1569; the sequence is NRLRVSCQKV…MFVGVVVENF (278 aa). The helical transmembrane segment at 1302–1324 threads the bilayer; sequence IAHKMFDHVVLVFIFLNCITIAL. At 1325–1342 the chain is on the extracellular side; sequence ERPDIDPGSTERAFLSVS. The chain crosses the membrane as a helical span at residues 1343-1363; that stretch reads NYIFTAIFVVEMMVKVVALGL. Topologically, residues 1364 to 1373 are cytoplasmic; the sequence is LWGEHAYLQS. The helical transmembrane segment at 1374-1393 threads the bilayer; sequence SWNVLDGLLVLVSLVDIIVA. Over 1394–1407 the chain is Extracellular; that stretch reads MASAGGAKILGVLR. Residues 1408–1429 form a helical membrane-spanning segment; that stretch reads VLRLLRTLRPLRVISRAPGLKL. Over 1430–1439 the chain is Cytoplasmic; it reads VVETLISSLR. The chain crosses the membrane as a helical span at residues 1440-1463; sequence PIGNIVLICCAFFIIFGILGVQLF. Residues 1464–1540 are Extracellular-facing; the sequence is KGKFYYCEGT…DQQPVQNHNP (77 aa). N1477 carries N-linked (GlcNAc...) asparagine glycosylation. Residues 1541–1566 traverse the membrane as a helical segment; it reads WMLLYFISFLLIVSFFVLNMFVGVVV. Topologically, residues 1567–1621 are cytoplasmic; it reads ENFHKCRQHQEAEEARRREEKRLRRLERRRRKAQRRPYYADYSHTRRSIHSLCTS. The stretch at 1607 to 1868 is one IV repeat; that stretch reads DYSHTRRSIH…VVVAVLMKHL (262 aa). A helical transmembrane segment spans residues 1622–1642; the sequence is HYLDLFITFIICLNVITMSME. Residues 1643–1656 lie on the Extracellular side of the membrane; sequence HYNQPKSLDEALKY. Residues 1657–1678 form a helical membrane-spanning segment; sequence CNYVFTIVFVFEAALKLVAFGF. Residues 1679 to 1685 lie on the Cytoplasmic side of the membrane; sequence RRFFKDR. The helical transmembrane segment at 1686–1704 threads the bilayer; the sequence is WNQLDLAIVLLSIMGIALE. At 1705 to 1718 the chain is on the extracellular side; sequence EIEMNAALPINPTI. Residues 1719-1742 traverse the membrane as a helical segment; it reads IRIMRVLRIARVLKLLKMATGMRA. Over 1743–1756 the chain is Cytoplasmic; sequence LLDTVVQALPQVGN. Residues 1757 to 1777 traverse the membrane as a helical segment; it reads LGLLFMLLFFIYAALGVELFG. Residues 1778-1840 lie on the Extracellular side of the membrane; that stretch reads RLECSEDNPC…KHCLSYLPAL (63 aa). The helical transmembrane segment at 1841–1868 threads the bilayer; that stretch reads SPVYFVTFMLVAQFVLVNVVVAVLMKHL. Topologically, residues 1869–2359 are cytoplasmic; sequence EESNKEARED…APDDSGDEPV (491 aa). Positions 1891–1911 are enriched in polar residues; that stretch reads QGSTAQPPPTAQESQGTQPDT. 4 disordered regions span residues 1891–1913, 1974–2003, 2016–2258, and 2335–2359; these read QGST…DTPN, SFQV…PRSL, HSES…GERW, and PQTP…DEPV. The span at 2016–2026 shows a compositional bias: basic and acidic residues; the sequence is HSESLEGKVDD. Acidic residues predominate over residues 2086-2096; it reads DEAEAADPADE. A compositionally biased stretch (basic and acidic residues) spans 2166–2181; the sequence is GESHLESGEVRGRASE.

This sequence belongs to the calcium channel alpha-1 subunit (TC 1.A.1.11) family. CACNA1H subfamily. Interacts (via N-terminal cytoplasmic domain) with STAC. In terms of processing, in response to raising of intracellular calcium, the T-type channels are activated by CaM-kinase II. In terms of tissue distribution, expressed in brain.

It localises to the cell membrane. The catalysed reaction is Ca(2+)(in) = Ca(2+)(out). Functionally, voltage-sensitive calcium channel that gives rise to T-type calcium currents. T-type calcium channels belong to the 'low-voltage activated (LVA)' group. A particularity of this type of channel is an opening at quite negative potentials, and a voltage-dependent inactivation. T-type channels serve pacemaking functions in both central neurons and cardiac nodal cells and support calcium signaling in secretory cells and vascular smooth muscle. They may also be involved in the modulation of firing patterns of neurons. In the adrenal zona glomerulosa, participates in the signaling pathway leading to aldosterone production in response to either AGT/angiotensin II, or hyperkalemia. In Rattus norvegicus (Rat), this protein is Voltage-dependent T-type calcium channel subunit alpha-1H (Cacna1h).